A 799-amino-acid chain; its full sequence is Zinc finger X-linked protein ZXDA (799 aa).

The disordered stretch occupies residues 1 to 89 (MEIPKLLPAR…QPSGGGDDFF (89 aa)). Over residues 13–26 (LQGGGGGGIPAGGG) the composition is skewed to gly residues. 10 C2H2-type zinc fingers span residues 267–291 (YLCP…LLTH), 300–324 (FKCP…LQSH), 330–354 (FGCP…MKGH), 360–382 (FKCE…QRSH), 389–413 (YQCA…NRAH), 420–444 (FSCS…LRSH), 450–474 (FLCD…KRKH), 480–504 (FMCP…SITH), 510–534 (FVCP…SKKH), and 543–568 (SRCP…VKRH). The segment at 267-573 (YLCPEALCGQ…MVKRHKVGQD (307 aa)) is required for interaction with ZXDC. Positions 572-699 (QDLLAQLEAA…NMDEVSSVSV (128 aa)) are required for transcriptional activation.

It belongs to the ZXD family. In terms of assembly, self-associates. Interacts with ZXDC and CIITA. May be expressed in brain, heart, kidney, liver, lung, muscle and placenta.

The protein localises to the nucleus. Its function is as follows. Cooperates with CIITA to promote transcription of MHC class I and MHC class II genes. This chain is Zinc finger X-linked protein ZXDA (ZXDA), found in Homo sapiens (Human).